The following is a 106-amino-acid chain: SDO1-like protein C21C3.19 (106 aa).

Belongs to the SDO1-like family.

The protein localises to the cytoplasm. It is found in the nucleus. Its function is as follows. May play a role in RNA metabolism. This chain is SDO1-like protein C21C3.19, found in Schizosaccharomyces pombe (strain 972 / ATCC 24843) (Fission yeast).